Here is a 170-residue protein sequence, read N- to C-terminus: Protein SprT (170 aa).

Residues 19–163 (REKLQQANLR…RCLHCGTSLR (145 aa)) form the SprT-like domain. Residue H78 participates in Zn(2+) binding. Residue E79 is part of the active site. H82 is a Zn(2+) binding site.

Belongs to the SprT family. The cofactor is Zn(2+).

The protein resides in the cytoplasm. In Erwinia tasmaniensis (strain DSM 17950 / CFBP 7177 / CIP 109463 / NCPPB 4357 / Et1/99), this protein is Protein SprT.